Reading from the N-terminus, the 383-residue chain is Succinyl-diaminopimelate desuccinylase (383 aa).

His-79 is a Zn(2+) binding site. Residue Asp-81 is part of the active site. Asp-110 is a binding site for Zn(2+). Glu-141 serves as the catalytic Proton acceptor. Residues Glu-142, Glu-170, and His-355 each contribute to the Zn(2+) site.

Belongs to the peptidase M20A family. DapE subfamily. Homodimer. Zn(2+) serves as cofactor. It depends on Co(2+) as a cofactor.

It carries out the reaction N-succinyl-(2S,6S)-2,6-diaminopimelate + H2O = (2S,6S)-2,6-diaminopimelate + succinate. It participates in amino-acid biosynthesis; L-lysine biosynthesis via DAP pathway; LL-2,6-diaminopimelate from (S)-tetrahydrodipicolinate (succinylase route): step 3/3. Catalyzes the hydrolysis of N-succinyl-L,L-diaminopimelic acid (SDAP), forming succinate and LL-2,6-diaminopimelate (DAP), an intermediate involved in the bacterial biosynthesis of lysine and meso-diaminopimelic acid, an essential component of bacterial cell walls. The protein is Succinyl-diaminopimelate desuccinylase of Helicobacter pylori (strain HPAG1).